A 642-amino-acid chain; its full sequence is Threonine--tRNA ligase (642 aa).

A TGS domain is found at 1-61; that stretch reads MPIITLPDGS…SEDANLEIIT (61 aa). The tract at residues 243–534 is catalytic; it reads DHRKIGKALN…ITEEYAGFFP (292 aa). Residues cysteine 334, histidine 385, and histidine 511 each contribute to the Zn(2+) site.

This sequence belongs to the class-II aminoacyl-tRNA synthetase family. In terms of assembly, homodimer. Requires Zn(2+) as cofactor.

The protein resides in the cytoplasm. The enzyme catalyses tRNA(Thr) + L-threonine + ATP = L-threonyl-tRNA(Thr) + AMP + diphosphate + H(+). Its function is as follows. Catalyzes the attachment of threonine to tRNA(Thr) in a two-step reaction: L-threonine is first activated by ATP to form Thr-AMP and then transferred to the acceptor end of tRNA(Thr). Also edits incorrectly charged L-seryl-tRNA(Thr). This chain is Threonine--tRNA ligase, found in Histophilus somni (strain 2336) (Haemophilus somnus).